The sequence spans 215 residues: Imidazole glycerol phosphate synthase subunit HisH (215 aa).

Residues 8 to 215 (KVVVFDYGFG…QLLNNWIGTL (208 aa)) enclose the Glutamine amidotransferase type-1 domain. The active-site Nucleophile is the cysteine 86. Active-site residues include histidine 196 and glutamate 198.

As to quaternary structure, heterodimer of HisH and HisF.

It localises to the cytoplasm. The enzyme catalyses 5-[(5-phospho-1-deoxy-D-ribulos-1-ylimino)methylamino]-1-(5-phospho-beta-D-ribosyl)imidazole-4-carboxamide + L-glutamine = D-erythro-1-(imidazol-4-yl)glycerol 3-phosphate + 5-amino-1-(5-phospho-beta-D-ribosyl)imidazole-4-carboxamide + L-glutamate + H(+). It catalyses the reaction L-glutamine + H2O = L-glutamate + NH4(+). The protein operates within amino-acid biosynthesis; L-histidine biosynthesis; L-histidine from 5-phospho-alpha-D-ribose 1-diphosphate: step 5/9. IGPS catalyzes the conversion of PRFAR and glutamine to IGP, AICAR and glutamate. The HisH subunit catalyzes the hydrolysis of glutamine to glutamate and ammonia as part of the synthesis of IGP and AICAR. The resulting ammonia molecule is channeled to the active site of HisF. In Streptomyces avermitilis (strain ATCC 31267 / DSM 46492 / JCM 5070 / NBRC 14893 / NCIMB 12804 / NRRL 8165 / MA-4680), this protein is Imidazole glycerol phosphate synthase subunit HisH.